Here is a 301-residue protein sequence, read N- to C-terminus: Recombination-associated protein RdgC (301 aa).

The protein belongs to the RdgC family.

The protein resides in the cytoplasm. It is found in the nucleoid. May be involved in recombination. The sequence is that of Recombination-associated protein RdgC from Stenotrophomonas maltophilia (strain R551-3).